We begin with the raw amino-acid sequence, 346 residues long: Leucine zipper protein 2 (346 aa).

The first 19 residues, 1–19 (MKFSPAHYLLPLLPALVLS), serve as a signal peptide directing secretion. Residues 16 to 211 (LVLSTRQDYE…QMKAMKETVQ (196 aa)) adopt a coiled-coil conformation. Residue asparagine 133 is glycosylated (N-linked (GlcNAc...) asparagine). Positions 164–192 (LRYGKKDLLFKAQQLTDLEQKLAVAKNEL) are leucine-zipper. Disordered stretches follow at residues 221–240 (QPPP…LLPP) and 248–346 (PDAA…EKIL). Over residues 250-261 (AAAKSKPQQSAS) the composition is skewed to low complexity. Over residues 262-283 (GNNESSQVESTKEGNPSTTACD) the composition is skewed to polar residues. Asparagine 264 carries an N-linked (GlcNAc...) asparagine glycan. Over residues 286–298 (DEGRPCSMKHKES) the composition is skewed to basic and acidic residues. The N-linked (GlcNAc...) asparagine glycan is linked to asparagine 302.

Its subcellular location is the secreted. This Homo sapiens (Human) protein is Leucine zipper protein 2 (LUZP2).